The primary structure comprises 292 residues: Ribosomal protein L11 methyltransferase (292 aa).

The S-adenosyl-L-methionine site is built by threonine 144, glycine 165, aspartate 187, and asparagine 229.

The protein belongs to the methyltransferase superfamily. PrmA family.

It localises to the cytoplasm. It carries out the reaction L-lysyl-[protein] + 3 S-adenosyl-L-methionine = N(6),N(6),N(6)-trimethyl-L-lysyl-[protein] + 3 S-adenosyl-L-homocysteine + 3 H(+). Its function is as follows. Methylates ribosomal protein L11. This Pseudomonas putida (strain W619) protein is Ribosomal protein L11 methyltransferase.